A 1420-amino-acid polypeptide reads, in one-letter code: DNA-directed RNA polymerase subunit beta' (1420 aa).

C71, C73, C86, and C89 together coordinate Zn(2+). Mg(2+) is bound by residues D461, D463, and D465. Zn(2+)-binding residues include C815, C889, C896, and C899.

This sequence belongs to the RNA polymerase beta' chain family. In terms of assembly, the RNAP catalytic core consists of 2 alpha, 1 beta, 1 beta' and 1 omega subunit. When a sigma factor is associated with the core the holoenzyme is formed, which can initiate transcription. The cofactor is Mg(2+). Zn(2+) is required as a cofactor.

It carries out the reaction RNA(n) + a ribonucleoside 5'-triphosphate = RNA(n+1) + diphosphate. DNA-dependent RNA polymerase catalyzes the transcription of DNA into RNA using the four ribonucleoside triphosphates as substrates. This chain is DNA-directed RNA polymerase subunit beta', found in Histophilus somni (strain 2336) (Haemophilus somnus).